We begin with the raw amino-acid sequence, 327 residues long: Pyruvate dehydrogenase E1 component subunit beta (327 aa).

Position 60 (Glu60) interacts with thiamine diphosphate.

As to quaternary structure, heterodimer of an alpha and a beta chain. The cofactor is thiamine diphosphate.

It catalyses the reaction N(6)-[(R)-lipoyl]-L-lysyl-[protein] + pyruvate + H(+) = N(6)-[(R)-S(8)-acetyldihydrolipoyl]-L-lysyl-[protein] + CO2. In terms of biological role, the pyruvate dehydrogenase complex catalyzes the overall conversion of pyruvate to acetyl-CoA and CO(2). It contains multiple copies of three enzymatic components: pyruvate dehydrogenase (E1), dihydrolipoamide acetyltransferase (E2) and lipoamide dehydrogenase (E3). The polypeptide is Pyruvate dehydrogenase E1 component subunit beta (pdhB) (Acholeplasma laidlawii).